A 145-amino-acid polypeptide reads, in one-letter code: D-aminoacyl-tRNA deacylase (145 aa).

Positions 137–138 (GP) match the Gly-cisPro motif, important for rejection of L-amino acids motif.

This sequence belongs to the DTD family. As to quaternary structure, homodimer.

The protein resides in the cytoplasm. The enzyme catalyses glycyl-tRNA(Ala) + H2O = tRNA(Ala) + glycine + H(+). The catalysed reaction is a D-aminoacyl-tRNA + H2O = a tRNA + a D-alpha-amino acid + H(+). In terms of biological role, an aminoacyl-tRNA editing enzyme that deacylates mischarged D-aminoacyl-tRNAs. Also deacylates mischarged glycyl-tRNA(Ala), protecting cells against glycine mischarging by AlaRS. Acts via tRNA-based rather than protein-based catalysis; rejects L-amino acids rather than detecting D-amino acids in the active site. By recycling D-aminoacyl-tRNA to D-amino acids and free tRNA molecules, this enzyme counteracts the toxicity associated with the formation of D-aminoacyl-tRNA entities in vivo and helps enforce protein L-homochirality. In Rhodopirellula baltica (strain DSM 10527 / NCIMB 13988 / SH1), this protein is D-aminoacyl-tRNA deacylase.